Consider the following 228-residue polypeptide: Homeobox-leucine zipper protein ATHB-53 (228 aa).

A disordered region spans residues 36–62; it reads DGGEESKPVKRRRKRRSKGSSATNEED. Over residues 44-53 the composition is skewed to basic residues; sequence VKRRRKRRSK. Positions 68–127 form a DNA-binding region, homeobox; sequence GMLRKRKLTDEQVNMLEYSFGNEHKLESGRKEKIAGELGLDPRQVAVWFQNRRARWKNKK. The tract at residues 128 to 156 is leucine-zipper; that stretch reads LEEEYAKLKNHHDNVVLGQCQLESQILKL.

Belongs to the HD-ZIP homeobox family. Class I subfamily. Expressed in root meristem, late flowers and siliques.

Its subcellular location is the nucleus. Functionally, probable transcription factor that may play a regulatory role in auxin/cytokinin signaling during root development. This is Homeobox-leucine zipper protein ATHB-53 (ATHB-53) from Arabidopsis thaliana (Mouse-ear cress).